The sequence spans 367 residues: Tetraacyldisaccharide 4'-kinase (367 aa).

Residue 68 to 75 (VLGGSGKT) coordinates ATP.

The protein belongs to the LpxK family.

It carries out the reaction a lipid A disaccharide + ATP = a lipid IVA + ADP + H(+). It participates in glycolipid biosynthesis; lipid IV(A) biosynthesis; lipid IV(A) from (3R)-3-hydroxytetradecanoyl-[acyl-carrier-protein] and UDP-N-acetyl-alpha-D-glucosamine: step 6/6. Functionally, transfers the gamma-phosphate of ATP to the 4'-position of a tetraacyldisaccharide 1-phosphate intermediate (termed DS-1-P) to form tetraacyldisaccharide 1,4'-bis-phosphate (lipid IVA). The protein is Tetraacyldisaccharide 4'-kinase of Chlamydia caviae (strain ATCC VR-813 / DSM 19441 / 03DC25 / GPIC) (Chlamydophila caviae).